The primary structure comprises 278 residues: Sulfur carrier protein FdhD (278 aa).

Residue C121 is the Cysteine persulfide intermediate of the active site. 260–265 (FCKPGR) lines the Mo-bis(molybdopterin guanine dinucleotide) pocket.

This sequence belongs to the FdhD family.

The protein localises to the cytoplasm. Its function is as follows. Required for formate dehydrogenase (FDH) activity. Acts as a sulfur carrier protein that transfers sulfur from IscS to the molybdenum cofactor prior to its insertion into FDH. The protein is Sulfur carrier protein FdhD of Salmonella paratyphi A (strain ATCC 9150 / SARB42).